The sequence spans 223 residues: Putative PAN domain-containing protein R486 (223 aa).

The first 23 residues, 1 to 23, serve as a signal peptide directing secretion; that stretch reads MSQTAIIIWIVVIIILLVLGGLG. The disordered stretch occupies residues 39–73; it reads PTPINPPSSITPIQPINPPSSITPIQPSGPPSGGN. A compositionally biased stretch (low complexity) spans 45–64; the sequence is PSSITPIQPINPPSSITPIQ. 2 PAN domains span residues 80-155 and 159-223; these read CPAY…EDGC and ARYN…KMPH. 2 disulfide bridges follow: cysteine 80-cysteine 155 and cysteine 109-cysteine 131. 3 N-linked (GlcNAc...) asparagine; by host glycosylation sites follow: asparagine 162, asparagine 189, and asparagine 213. A disulfide bridge links cysteine 182 with cysteine 204.

The protein resides in the secreted. Its subcellular location is the virion. The protein is Putative PAN domain-containing protein R486 of Acanthamoeba polyphaga mimivirus (APMV).